Reading from the N-terminus, the 154-residue chain is Large ribosomal subunit protein uL13 (154 aa).

The protein belongs to the universal ribosomal protein uL13 family. As to quaternary structure, part of the 50S ribosomal subunit.

Its function is as follows. This protein is one of the early assembly proteins of the 50S ribosomal subunit, although it is not seen to bind rRNA by itself. It is important during the early stages of 50S assembly. The sequence is that of Large ribosomal subunit protein uL13 from Brucella abortus (strain S19).